A 210-amino-acid chain; its full sequence is Cytochrome c oxidase subunit 2 (210 aa).

The Mitochondrial intermembrane segment spans residues 1-20; that stretch reads MAFILSFWMIFLLDSVIVLL. A helical transmembrane segment spans residues 21 to 42; that stretch reads SFVCFVCVWICALLFSTVLLVS. The Mitochondrial matrix portion of the chain corresponds to 43 to 60; it reads KLNNIYCTWDFTASKFID. The helical transmembrane segment at 61–86 threads the bilayer; sequence VYWFTIGGMFSLGLLLRLCLLLYFGH. Over 87–210 the chain is Mitochondrial intermembrane; the sequence is LNFVSFDLCK…GFMPIVICFI (124 aa). Residues His-157, Cys-192, Glu-194, Cys-196, His-200, and Met-203 each coordinate Cu cation. Glu-194 provides a ligand contact to Mg(2+).

Belongs to the cytochrome c oxidase subunit 2 family. Component of the cytochrome c oxidase (complex IV, CIV), a multisubunit enzyme composed of a catalytic core of 3 subunits and several supernumerary subunits. The complex exists as a monomer or a dimer and forms supercomplexes (SCs) in the inner mitochondrial membrane with ubiquinol-cytochrome c oxidoreductase (cytochrome b-c1 complex, complex III, CIII). It depends on Cu cation as a cofactor.

It localises to the mitochondrion inner membrane. The enzyme catalyses 4 Fe(II)-[cytochrome c] + O2 + 8 H(+)(in) = 4 Fe(III)-[cytochrome c] + 2 H2O + 4 H(+)(out). In terms of biological role, component of the cytochrome c oxidase, the last enzyme in the mitochondrial electron transport chain which drives oxidative phosphorylation. The respiratory chain contains 3 multisubunit complexes succinate dehydrogenase (complex II, CII), ubiquinol-cytochrome c oxidoreductase (cytochrome b-c1 complex, complex III, CIII) and cytochrome c oxidase (complex IV, CIV), that cooperate to transfer electrons derived from NADH and succinate to molecular oxygen, creating an electrochemical gradient over the inner membrane that drives transmembrane transport and the ATP synthase. Cytochrome c oxidase is the component of the respiratory chain that catalyzes the reduction of oxygen to water. Electrons originating from reduced cytochrome c in the intermembrane space (IMS) are transferred via the dinuclear copper A center (CU(A)) of subunit 2 and heme A of subunit 1 to the active site in subunit 1, a binuclear center (BNC) formed by heme A3 and copper B (CU(B)). The BNC reduces molecular oxygen to 2 water molecules using 4 electrons from cytochrome c in the IMS and 4 protons from the mitochondrial matrix. The chain is Cytochrome c oxidase subunit 2 from Leishmania tarentolae (Sauroleishmania tarentolae).